We begin with the raw amino-acid sequence, 234 residues long: Enterobactin synthase component D (234 aa).

3 residues coordinate Mg(2+): aspartate 107, glutamate 109, and glutamate 152.

The protein belongs to the P-Pant transferase superfamily. EntD family. EntB, EntD, EntE, and EntF form a multienzyme complex called enterobactin synthase. Mg(2+) is required as a cofactor.

The protein resides in the membrane. It catalyses the reaction apo-[aryl-carrier protein] + CoA = holo-[aryl-carrier protein] + adenosine 3',5'-bisphosphate + H(+). It carries out the reaction apo-[peptidyl-carrier protein] + CoA = holo-[peptidyl-carrier protein] + adenosine 3',5'-bisphosphate + H(+). Its pathway is siderophore biosynthesis; enterobactin biosynthesis. Involved in the biosynthesis of the siderophore enterobactin (enterochelin), which is a macrocyclic trimeric lactone of N-(2,3-dihydroxybenzoyl)-serine. The serine trilactone serves as a scaffolding for the three catechol functionalities that provide hexadentate coordination for the tightly ligated iron(2+) atoms. Plays an essential role in the assembly of the enterobactin by catalyzing the transfer of the 4'-phosphopantetheine (Ppant) moiety from coenzyme A to the apo-domains of both EntB (ArCP domain) and EntF (PCP domain) to yield their holo-forms which make them competent for the activation of 2,3-dihydroxybenzoate (DHB) and L-serine, respectively. This chain is Enterobactin synthase component D, found in Salmonella typhimurium (strain LT2 / SGSC1412 / ATCC 700720).